An 83-amino-acid polypeptide reads, in one-letter code: Normal mucosa of esophagus-specific gene 1 protein (83 aa).

Belongs to the complex I NDUFA4 subunit family. As to expression, expressed mainly in stomach, placenta, small intestine and colon, as well as in normal mucosa of esophagus. Down-regulated in esophageal squamous cell carcinoma.

Its subcellular location is the nucleus. The sequence is that of Normal mucosa of esophagus-specific gene 1 protein (NMES1) from Homo sapiens (Human).